A 775-amino-acid polypeptide reads, in one-letter code: Melanoma-associated antigen D1 (775 aa).

Residues 37-330 (SEAPPTSQAT…PARQTPSAWQ (294 aa)) form a disordered region. Residues 39–50 (APPTSQATAAAS) show a composition bias toward low complexity. 7 stretches are compositionally biased toward polar residues: residues 52–63 (PNASPQSSQPPT), 84–100 (KAQN…SQAR), 107–120 (KNQS…QNGT), 149–178 (GQNS…NQPK), 221–235 (AQTS…NVES), 247–258 (VNNLNVEENNSG), and 296–308 (LAWQ…QNQT). 19 consecutive repeat copies span residues 292-297 (WQTPLA), 298-303 (WQNPSG), 304-309 (WQNQTA), 329-334 (WQNPVA), 335-340 (WQNPVI), 341-346 (WPNPVI), 347-352 (WQNPVI), 353-358 (WPNPIV), 359-364 (WPGPIV), 365-370 (WPNPMA), 371-376 (WQSTPG), 377-382 (WQSPPS), 383-388 (WQAPPS), 389-394 (WQSPQD), 395-400 (WQGPPD), 401-406 (WQVPPD), 407-412 (WSMPPD), 413-418 (WSFPSD), and 419-424 (WPFPPD). The 22 X 6 AA tandem repeats of W-[PQ]-X-P-X-X stretch occupies residues 292–441 (WQTPLAWQNP…IPPDWQNLRP (150 aa)). The segment covering 309 to 326 (ARQTPPAARQSPPARQTP) has biased composition (low complexity). Residues 374–409 (TPGWQSPPSWQAPPSWQSPQDWQGPPDWQVPPDWSM) form a disordered region. A compositionally biased stretch (low complexity) spans 375–406 (PGWQSPPSWQAPPSWQSPQDWQGPPDWQVPPD). One copy of the 20; approximate repeat lies at 425–429 (WIPAD). Repeat copies occupy residues 430 to 435 (WPIPPD) and 436 to 441 (WQNLRP). Residues 437 to 452 (QNLRPSPNLRSSSNSR) are compositionally biased toward low complexity. Residues 437 to 463 (QNLRPSPNLRSSSNSRASQNQGPPQPR) are disordered. One can recognise an MAGE domain in the interval 468-666 (LQERANKLVK…RDWTAQFMEA (199 aa)).

In terms of assembly, interacts with DLX5, DLX7 and MSX2 and forms homomultimers. Interacts with UNC5A. Interacts with TRIM28 and PJA1. Interacts with NGFR/p75NTR and RORA. In terms of tissue distribution, ubiquitously expressed in many adult tissues, except for the spleen. Expressed in osteoblastic and chondrogenic cell lines and also during embryonic development.

It localises to the nucleus. Its subcellular location is the cytoplasm. The protein localises to the cell membrane. Functionally, involved in the apoptotic response after nerve growth factor (NGF) binding in neuronal cells. Inhibits cell cycle progression, and facilitates NGFR-mediated apoptosis. May act as a regulator of the function of DLX family members. May enhance ubiquitin ligase activity of RING-type zinc finger-containing E3 ubiquitin-protein ligases. Proposed to act through recruitment and/or stabilization of the Ubl-conjugating enzyme (E2) at the E3:substrate complex. Plays a role in the circadian rhythm regulation. May act as RORA coregulator, modulating the expression of core clock genes such as BMAL1 and NFIL3, induced, or NR1D1, repressed. The protein is Melanoma-associated antigen D1 (Maged1) of Mus musculus (Mouse).